The chain runs to 416 residues: Probable histone-binding protein lin-53 (416 aa).

6 WD repeats span residues 118–158, 170–210, 220–260, 263–303, 307–347, and 364–404; these read NHEG…SVPK, GHTK…GANG, GHES…PGHA, AHSA…LKLH, SHRD…EDQT, and GHTA…YNDV.

The protein belongs to the WD repeat RBAP46/RBAP48/MSI1 family. In terms of assembly, binds directly to helix 1 of the histone fold of histone H4, a region that is not accessible when H4 is in chromatin. Probable component of a NuRD-like complex, composed of at least lin-53 and hda-1. Interacts with lin-35. Interacts with hda-1; the interaction is direct. Component of the DRM complex, at least composed of lin-9, lin-35, lin-37, lin-52, lin-53, lin-54- dpl-1 and efl-1. Interacts with hcp-3.

Its subcellular location is the nucleus. It localises to the chromosome. The protein localises to the centromere. Its function is as follows. Core histone-binding subunit that may target chromatin assembly factors, chromatin remodeling factors and histone deacetylases to their histone substrates in a manner that is regulated by nucleosomal DNA. Required for hcp-3 and his-1 stabilization, localization of hcp-3 to centromeres and for proper chromosome segregation. Synthetic multivulva class B (synMuvB) protein. SynMuvB proteins are required to repress the induction of vulval development by Ras signaling and probably act by forming the multiprotein DRM complex that represses transcription. The chain is Probable histone-binding protein lin-53 from Caenorhabditis briggsae.